Consider the following 501-residue polypeptide: Rhazimal synthase (501 aa).

A helical membrane pass occupies residues 4–24 (MQLSFASAVVYSLIFFVFLLV). An N-linked (GlcNAc...) asparagine glycan is attached at asparagine 282. Cysteine 442 provides a ligand contact to heme.

The protein belongs to the cytochrome P450 family. Heme serves as cofactor.

It localises to the membrane. The catalysed reaction is (19E)-geissoschizine + reduced [NADPH--hemoprotein reductase] + O2 = rhazimal + oxidized [NADPH--hemoprotein reductase] + 2 H2O + H(+). The enzyme catalyses (19E)-geissoschizine + reduced [NADPH--hemoprotein reductase] + O2 = akuammicine + formate + oxidized [NADPH--hemoprotein reductase] + H2O + H(+). It participates in alkaloid biosynthesis. In terms of biological role, a cytochrome P450 monooxygenase involved in the biosynthesis of akuammilan monoterpene indole alkaloids (MIAs) natural products, components with various biological properties such as antidiabetic, antibacterial, anti-inflammatory, anticancer, and antimalarial activities. Catalyzes the conversion of geissoschizine to rhazimal. Can also, with lower efficiency, support the conversion of geissoschizine to akuammicine. The polypeptide is Rhazimal synthase (Alstonia scholaris (Dogbane)).